Here is a 263-residue protein sequence, read N- to C-terminus: UPF0246 protein Strop_2927 (263 aa).

This sequence belongs to the UPF0246 family.

The chain is UPF0246 protein Strop_2927 from Salinispora tropica (strain ATCC BAA-916 / DSM 44818 / JCM 13857 / NBRC 105044 / CNB-440).